The following is a 355-amino-acid chain: Aurora kinase (355 aa).

The region spanning 89–340 is the Protein kinase domain; sequence FEIGKPLGKG…LEQVMRHPWI (252 aa). ATP is bound by residues 95–103 and Lys118; that span reads LGKGKFGRV. Catalysis depends on Asp212, which acts as the Proton acceptor.

The protein belongs to the protein kinase superfamily. Ser/Thr protein kinase family. Aurora subfamily. In terms of assembly, component of the CPC complex at least composed of ark1, bir1 and pic1. Interacts with the mitotic checkpoint complex (MCC) subunit mad3.

The protein localises to the nucleus. It is found in the cytoplasm. It localises to the cytoskeleton. The protein resides in the spindle. The enzyme catalyses L-seryl-[protein] + ATP = O-phospho-L-seryl-[protein] + ADP + H(+). It carries out the reaction L-threonyl-[protein] + ATP = O-phospho-L-threonyl-[protein] + ADP + H(+). Its function is as follows. Component of the chromosomal passenger complex (CPC), a complex that acts as a key regulator of chromosome segregation and cytokinesis. Has a role in error-correction of aberrent kinetochore-microtubule attachments to ensure that sister kinetochores become bioriented and connect to opposite poles by promoting spindle assembly checkpoint signaling. Ark1 is also required for phosphorylation of histone H3 that accompanies chromosome condensation and condensin recruitment to mitotic chromatin. The sequence is that of Aurora kinase (ark1) from Schizosaccharomyces pombe (strain 972 / ATCC 24843) (Fission yeast).